The chain runs to 432 residues: Amino-acid acetyltransferase (432 aa).

Positions 286–425 constitute an N-acetyltransferase domain; it reads ESLREATIED…ASLYNYQRNS (140 aa).

Belongs to the acetyltransferase family. ArgA subfamily.

The protein resides in the cytoplasm. It catalyses the reaction L-glutamate + acetyl-CoA = N-acetyl-L-glutamate + CoA + H(+). Its pathway is amino-acid biosynthesis; L-arginine biosynthesis; N(2)-acetyl-L-ornithine from L-glutamate: step 1/4. The polypeptide is Amino-acid acetyltransferase (Ectopseudomonas mendocina (strain ymp) (Pseudomonas mendocina)).